Reading from the N-terminus, the 1663-residue chain is Complement C3 (1663 aa).

The first 24 residues, 1-24, serve as a signal peptide directing secretion; it reads MGPASGSQLLVLLLLLASSPLALG. S40 is modified (phosphoserine). Cystine bridges form between C559-C816, C626-C661, C693-C720, C694-C727, C707-C728, C873-C1513, C1101-C1158, C1358-C1489, C1389-C1458, C1506-C1511, C1518-C1590, C1537-C1661, and C1637-C1646. S671 bears the Phosphoserine mark. Residues 693–728 enclose the Anaphylatoxin-like domain; the sequence is CCEDGMRDIPMRYSCQRRARLITQGENCIKAFIDCC. N-linked (GlcNAc...) asparagine glycosylation is present at N939. S968 bears the Phosphoserine mark. The isoglutamyl cysteine thioester (Cys-Gln) cross-link spans 1010–1013; that stretch reads CGEQ. S1321 carries the phosphoserine modification. The 144-residue stretch at 1518-1661 folds into the NTR domain; it reads CFMQQSQEKI…FTESMVVYGC (144 aa). S1573 carries the phosphoserine modification. A glycan (N-linked (GlcNAc...) asparagine) is linked at N1617. The tract at residues 1634–1659 is interaction with CFP/properdin; sequence AEECQDQKYQKQCEELGAFTESMVVY.

In absence of complement activation, the C3 precursor is first processed by the removal of 4 Arg residues, forming two chains, beta and alpha, linked by a disulfide bond. In terms of assembly, complement C3b is composed of complement C3b and complement C3 beta chains that are associated via disulfide bonds. Non-enzymatic component of the C5 convertase, also named C4bC2bC3b, composed of the serine protease complement C2b (C2), complement C3b, as well as complement C4b (C4). Non-enzymatic component of the C5 convertase of the alternative complement pathways composed of the serine protease complement CFB and complement C3b. Interacts with CFP; interaction takes place together with CFB in the alternative complement system and allows the complex to become active. Interacts with CR1 (via Sushi 8 and Sushi 9 domains). Interacts with CFH. As to quaternary structure, interacts with CFH. Interacts with CR2. During pregnancy, C3dg exists as a complex (probably a 2:2:2 heterohexamer) with AGT and the proform of PRG2. Interacts with CR2 (via the N-terminal Sushi domains 1 and 2). In terms of processing, C3 precursor is first processed by the removal of 4 Arg residues, forming two chains, beta and alpha, linked by a disulfide bond. During activation of the complement systems, the alpha chain is cleaved into C3a and C3b by the C3 convertase: C3b stays linked to the beta chain, while C3a is released in the plasma. The alpha chain is cleaved by the serine protease complement C2b component of the C3 convertase to generate C3a and C3b following activation by the classical, lectin and GZMK complement systems. The alpha chain is cleaved by CFB component of the C3 convertase to generate C3a and C3b following activation by the alternative complement system. C3a is further processed by carboxypeptidases to release the C-terminal arginine residue generating the acylation stimulating protein (ASP). Levels of ASP are increased in adipocytes in the postprandial period and by insulin and dietary chylomicrons. Post-translationally, complement C3b is rapidly split in two positions by factor I (CFI) and a cofactor (CFH) to form iC3b (inactivated C3b) and C3f which is released. CFI and CFH catalyze proteolytic degradation of already-deposited complement C3b. Then iC3b is slowly cleaved (possibly by CFI) to form C3c (beta chain + alpha' chain fragment 1 + alpha' chain fragment 2), C3dg and C3f. Other proteases produce other fragments such as C3d or C3g. In terms of processing, upon activation, the internal thioester bond reacts with carbohydrate antigens on the target surface to form amide or ester bonds, leading to covalent association with the surface of pathogens. Complement C3b interacts with complement C4b via a thioester linkage. Post-translationally, phosphorylated by FAM20C in the extracellular medium.

Its subcellular location is the secreted. It is found in the cell surface. Complement activation is inhibited by VSIG4. Functionally, precursor of non-enzymatic components of the classical, alternative, lectin and GZMK complement pathways, which consist in a cascade of proteins that leads to phagocytosis and breakdown of pathogens and signaling that strengthens the adaptive immune system. In terms of biological role, non-enzymatic component of C5 convertase. Generated following cleavage by C3 convertase, it covalently attaches to the surface of pathogens, where it acts as an opsonin that marks the surface of antigens for removal. Complement C3b binds covalently via its reactive thioester, to cell surface carbohydrates or immune aggregates. Together with complement C4b, it then recruits the serine protease complement C2b to form the C5 convertase, which cleaves and activate C5, the next component of the complement pathways. In the alternative complement pathway, recruits the serine protease CFB to form the C5 convertase that cleaves and activates C5. Mediator of local inflammatory process released following cleavage by C3 convertase. Acts by binding to its receptor, C3AR1, activating G protein-coupled receptor signaling, promoting the phosphorylation, ARRB2-mediated internalization and endocytosis of C3AR1. C3a anaphylatoxin stimulates the activation of immune cells such as mast cells and basophilic leukocytes to release inflammation agents, such as cytokines, chemokines and histamine, which promote inflammation development. Also acts as potent chemoattractant for the migration of macrophages and neutrophils to the inflamed tissues, resulting in neutralization of the inflammatory triggers by multiple ways, such as phagocytosis and generation of reactive oxidants. Its function is as follows. Adipogenic hormone that stimulates triglyceride synthesis and glucose transport in adipocytes, regulating fat storage and playing a role in postprandial triglyceride clearance. Appears to stimulate triglyceride synthesis via activation of the PLC, MAPK and AKT signaling pathways. Acts by binding to its receptor, C5AR2, activating G protein-coupled receptor signaling, promoting the phosphorylation, ARRB2-mediated internalization and endocytosis of C5AR2. Functionally, acts as a chemoattractant for neutrophils in chronic inflammation. In Mus musculus (Mouse), this protein is Complement C3.